A 365-amino-acid polypeptide reads, in one-letter code: Putative glutamate--cysteine ligase 2-3 (365 aa).

It belongs to the glutamate--cysteine ligase type 2 family. YbdK subfamily.

The enzyme catalyses L-cysteine + L-glutamate + ATP = gamma-L-glutamyl-L-cysteine + ADP + phosphate + H(+). In terms of biological role, ATP-dependent carboxylate-amine ligase which exhibits weak glutamate--cysteine ligase activity. The protein is Putative glutamate--cysteine ligase 2-3 of Mycolicibacterium smegmatis (strain ATCC 700084 / mc(2)155) (Mycobacterium smegmatis).